Reading from the N-terminus, the 541-residue chain is Arginine--tRNA ligase (541 aa).

The 'HIGH' region motif lies at 123 to 133 (ANPTGFLHIGH).

Belongs to the class-I aminoacyl-tRNA synthetase family. In terms of assembly, monomer.

The protein resides in the cytoplasm. The catalysed reaction is tRNA(Arg) + L-arginine + ATP = L-arginyl-tRNA(Arg) + AMP + diphosphate. The sequence is that of Arginine--tRNA ligase from Metamycoplasma arthritidis (strain 158L3-1) (Mycoplasma arthritidis).